We begin with the raw amino-acid sequence, 248 residues long: Tyrosine recombinase XerD-like (248 aa).

The region spanning 1–72 is the Core-binding (CB) domain; the sequence is MIAFIEPFLA…TVNQFLYYLY (72 aa). Residues 92-248 form the Tyr recombinase domain; sequence SLKPQLTRLD…PITLEKYYKM (157 aa). Arg213 is a catalytic residue. Tyr245 serves as the catalytic O-(3'-phospho-DNA)-tyrosine intermediate.

Belongs to the 'phage' integrase family. XerD-like subfamily.

Its subcellular location is the cytoplasm. Its function is as follows. Putative tyrosine recombinase. Not involved in the cutting and rejoining of the recombining DNA molecules on dif(SL) site. In Streptococcus equi subsp. zooepidemicus (strain MGCS10565), this protein is Tyrosine recombinase XerD-like.